The following is a 175-amino-acid chain: Shikimate kinase (175 aa).

14-19 (GAGKST) provides a ligand contact to ATP. Position 18 (Ser18) interacts with Mg(2+). Residues Asp36, Arg60, and Gly82 each contribute to the substrate site. Residue Arg120 participates in ATP binding. Arg140 provides a ligand contact to substrate. Gln157 contacts ATP.

The protein belongs to the shikimate kinase family. Monomer. It depends on Mg(2+) as a cofactor.

The protein localises to the cytoplasm. It carries out the reaction shikimate + ATP = 3-phosphoshikimate + ADP + H(+). It functions in the pathway metabolic intermediate biosynthesis; chorismate biosynthesis; chorismate from D-erythrose 4-phosphate and phosphoenolpyruvate: step 5/7. In terms of biological role, catalyzes the specific phosphorylation of the 3-hydroxyl group of shikimic acid using ATP as a cosubstrate. The sequence is that of Shikimate kinase from Histophilus somni (strain 2336) (Haemophilus somnus).